The following is a 615-amino-acid chain: MTTLDSNNNTGGVITYIGSSGSSPSRTSPESLYSDSSNGSFQSLTQGCPTYFPPSPTGSLTQDPARSFGSAPPSLSDDSSPSSASSSSSSSSSSFYNGSPPGSLQVAMEDSSRVSPSKGTSNITKLNGMVLLCKVCGDVASGFHYGVHACEGCKGFFRRSIQQNIQYKRCLKNENCSIVRINRNRCQQCRFKKCLSVGMSRDAVRFGRIPKREKQRMLAEMQSAMNLANNQLSSLCPLETSPTPHPTSGSMGPSPPPAPAPTPLVGFSQFPQQLTPPRSPSPEPTMEDVISQVARAHREIFTYAHDKLGTSPGNFNANHASGSPSATTPHRWESQGCPSAPNDNNLLAAQRHNEALNGLRQGPSSYPPTWPSGPTHHSCHQPNSNGHRLCPTHVYSAPEGEAPANSLRQGNTKNVLLACPMNMYPHGRSGRTVQEIWEDFSMSFTPAVREVVEFAKHIPGFRDLSQHDQVTLLKAGTFEVLMVRFASLFNVKDQTVMFLSRTTYSLQELGAMGMGDLLNAMFDFSEKLNSLALTEEELGLFTAVVLVSADRSGMENSASVEQLQETLLRALRALVLKNRPSETSRFTKLLLKLPDLRTLNNMHSEKLLSFRVDAQ.

Over residues 1–12 the composition is skewed to polar residues; the sequence is MTTLDSNNNTGG. The interval 1–70 is required for phosphorylation by CSNK1E and cytoplasmic localization; the sequence is MTTLDSNNNT…TQDPARSFGS (70 aa). The disordered stretch occupies residues 1–120; it reads MTTLDSNNNT…SSRVSPSKGT (120 aa). Residues 1–129 form a modulating region; it reads MTTLDSNNNT…TSNITKLNGM (129 aa). Residues 14-34 show a composition bias toward low complexity; it reads ITYIGSSGSSPSRTSPESLYS. Residues 35–48 show a composition bias toward polar residues; the sequence is DSSNGSFQSLTQGC. The segment at 49–285 is crucial for activation of GJA1; sequence PTYFPPSPTG…PPRSPSPEPT (237 aa). Residues Ser-55 and Ser-59 each carry the phosphoserine; by GSK3-beta modification. Residues 70-94 are compositionally biased toward low complexity; it reads SAPPSLSDDSSPSSASSSSSSSSSS. The nuclear receptor DNA-binding region spans 130 to 206; it reads VLLCKVCGDV…VGMSRDAVRF (77 aa). 2 NR C4-type zinc fingers span residues 133–153 and 170–194; these read CKVCGDVASGFHYGVHACEGC and CLKNENCSIVRINRNRCQQCRFKKC. N6-acetyllysine; by KAT5 is present on residues Lys-192 and Lys-193. Disordered stretches follow at residues 235 to 286 and 312 to 337; these read LCPL…EPTM and PGNFNANHASGSPSATTPHRWESQGC. The segment covering 240 to 252 has biased composition (low complexity); the sequence is TSPTPHPTSGSMG. Residues 253–262 are compositionally biased toward pro residues; it reads PSPPPAPAPT. Thr-275 is modified (phosphothreonine; by CDK1). The NR LBD domain maps to 285 to 615; the sequence is TMEDVISQVA…KLLSFRVDAQ (331 aa). A compositionally biased stretch (polar residues) spans 312–328; that stretch reads PGNFNANHASGSPSATT. Position 419 (Cys-419) interacts with heme. Lys-592 carries the post-translational modification N6-acetyllysine. His-603 is a heme binding site.

It belongs to the nuclear hormone receptor family. NR1 subfamily. In terms of assembly, binds DNA as a monomer or a homodimer. Interacts with NR2E3 and ZNHIT1. Interacts with C1D. Interacts with SP1. Interacts with OPHN1 (via C-terminus). Interacts with PER2; the interaction associates PER2 to BMAL1 promoter region. Interacts with CRY1. Interacts with CCAR2. Interacts with SIAH2. Interacts with FBXW7 and CDK1. Interacts with HUWE1. Interacts with NR0B2. Interacts with NFIL3. Interacts (via domain NR LBD) with HSP90AA1 and HSP90AB1. In terms of processing, ubiquitinated, leading to its proteasomal degradation. Ubiquitinated by the SCF(FBXW7) complex when phosphorylated by CDK1 leading to its proteasomal degradation. Ubiquitinated by SIAH2; leading to its proteasomal degradation. Rapidly ubiquitinated in response to inflammatory triggers and sumoylation is a prerequisite to its ubiquitination. Post-translationally, sumoylated by UBE2I, desumoylated by SENP1, and sumoylation is a prerequisite to its ubiquitination. Phosphorylated by CSNK1E; phosphorylation enhances its cytoplasmic localization. In terms of processing, undergoes lysosome-mediated degradation in a time-dependent manner in the liver. As to expression, expressed during adipocyte differentiation (at protein level). Expressed in skeletal muscle, bladder, lumbar spinal cord, pancreatic islets and hypothalamus. Expressed in developing and adult retina. In the adult retina, predominantly expressed in the outer nuclear layer, where rod and cone cells reside, and also localized to the ganglion cell layer. Expressed in a circadian manner in the liver. Expressed in a circadian manner in the lung with a peak between ZT8 and ZT12.

Its subcellular location is the nucleus. It localises to the cytoplasm. It is found in the cell projection. The protein resides in the dendrite. The protein localises to the dendritic spine. Its function is as follows. Transcriptional repressor which coordinates circadian rhythm and metabolic pathways in a heme-dependent manner. Integral component of the complex transcription machinery that governs circadian rhythmicity and forms a critical negative limb of the circadian clock by directly repressing the expression of core clock components BMAL1, CLOCK and CRY1. Also regulates genes involved in metabolic functions, including lipid and bile acid metabolism, adipogenesis, gluconeogenesis and the macrophage inflammatory response. Acts as a receptor for heme which stimulates its interaction with the NCOR1/HDAC3 corepressor complex, enhancing transcriptional repression. Recognizes two classes of DNA response elements within the promoter of its target genes and can bind to DNA as either monomers or homodimers, depending on the nature of the response element. Binds as a monomer to a response element composed of the consensus half-site motif 5'-[A/G]GGTCA-3' preceded by an A/T-rich 5' sequence (RevRE), or as a homodimer to a direct repeat of the core motif spaced by two nucleotides (RevDR-2). Acts as a potent competitive repressor of ROR alpha (RORA) function and regulates the levels of its ligand heme by repressing the expression of PPARGC1A, a potent inducer of heme synthesis. Regulates lipid metabolism by repressing the expression of APOC3 and by influencing the activity of sterol response element binding proteins (SREBPs); represses INSIG2 which interferes with the proteolytic activation of SREBPs which in turn govern the rhythmic expression of enzymes with key functions in sterol and fatty acid synthesis. Regulates gluconeogenesis via repression of G6PC1 and PEPCK and adipocyte differentiation via repression of PPARG. Regulates glucagon release in pancreatic alpha-cells via the AMPK-NAMPT-SIRT1 pathway and the proliferation, glucose-induced insulin secretion and expression of key lipogenic genes in pancreatic-beta cells. Positively regulates bile acid synthesis by increasing hepatic expression of CYP7A1 via repression of NR0B2 and NFIL3 which are negative regulators of CYP7A1. Modulates skeletal muscle oxidative capacity by regulating mitochondrial biogenesis and autophagy; controls mitochondrial biogenesis and respiration by interfering with the STK11-PRKAA1/2-SIRT1-PPARGC1A signaling pathway. Represses the expression of SERPINE1/PAI1, an important modulator of cardiovascular disease and the expression of inflammatory cytokines and chemokines in macrophages. Represses gene expression at a distance in macrophages by inhibiting the transcription of enhancer-derived RNAs (eRNAs). Plays a role in the circadian regulation of body temperature and negatively regulates thermogenic transcriptional programs in brown adipose tissue (BAT); imposes a circadian oscillation in BAT activity, increasing body temperature when awake and depressing thermogenesis during sleep. In concert with NR2E3, regulates transcriptional networks critical for photoreceptor development and function. In addition to its activity as a repressor, can also act as a transcriptional activator. In the ovarian granulosa cells acts as a transcriptional activator of STAR which plays a role in steroid biosynthesis. In collaboration with SP1, activates GJA1 transcription in a heme-independent manner. Represses the transcription of CYP2B10, CYP4A10 and CYP4A14. Represses the transcription of CES2. Represses and regulates the circadian expression of TSHB in a NCOR1-dependent manner. Negatively regulates the protein stability of NR3C1 and influences the time-dependent subcellular distribution of NR3C1, thereby affecting its transcriptional regulatory activity. Plays a critical role in the circadian control of neutrophilic inflammation in the lung; under resting, non-stress conditions, acts as a rhythmic repressor to limit inflammatory activity whereas in the presence of inflammatory triggers undergoes ubiquitin-mediated degradation thereby relieving inhibition of the inflammatory response. Plays a key role in the circadian regulation of microglial activation and neuroinflammation; suppresses microglial activation through the NF-kappaB pathway in the central nervous system. Plays a role in the regulation of the diurnal rhythms of lipid and protein metabolism in the skeletal muscle via transcriptional repression of genes controlling lipid and amino acid metabolism in the muscle. This is Nuclear receptor subfamily 1 group D member 1 (Nr1d1) from Mus musculus (Mouse).